Reading from the N-terminus, the 495-residue chain is Probable leucine aminopeptidase 2 (495 aa).

The signal sequence occupies residues 1-21 (MKSQLLSLAVAVTTISQGVVG). Residues 130-216 (MAELVVAKNN…SQEDGKNLAT (87 aa)) enclose the PA domain. N-linked (GlcNAc...) asparagine glycans are attached at residues Asn142 and Asn235. Zn(2+) is bound by residues His259 and Asp271. Asn272 carries N-linked (GlcNAc...) asparagine glycosylation. The active-site Proton acceptor is the Glu303. Glu304 and Asp332 together coordinate Zn(2+). Asn352 is a glycosylation site (N-linked (GlcNAc...) asparagine). Zn(2+) is bound at residue His430.

This sequence belongs to the peptidase M28 family. M28A subfamily. As to quaternary structure, monomer. The cofactor is Zn(2+).

It is found in the secreted. In terms of biological role, extracellular aminopeptidase that releases a wide variety of amino acids from natural peptides and contributes to pathogenicity. This Trichophyton verrucosum (strain HKI 0517) protein is Probable leucine aminopeptidase 2 (LAP2).